Consider the following 336-residue polypeptide: Tryptophan--tRNA ligase (336 aa).

Residues 9–11 and 17–18 each bind ATP; these read QPS and GN. The 'HIGH' region motif lies at 10–18; sequence PSGTPTIGN. Aspartate 134 provides a ligand contact to L-tryptophan. ATP contacts are provided by residues 146 to 148, isoleucine 189, and 198 to 202; these read GDD and KMSKS. The 'KMSKS' region motif lies at 198 to 202; that stretch reads KMSKS.

Belongs to the class-I aminoacyl-tRNA synthetase family. Homodimer.

The protein resides in the cytoplasm. It catalyses the reaction tRNA(Trp) + L-tryptophan + ATP = L-tryptophyl-tRNA(Trp) + AMP + diphosphate + H(+). In terms of biological role, catalyzes the attachment of tryptophan to tRNA(Trp). The sequence is that of Tryptophan--tRNA ligase from Enterococcus faecalis (strain ATCC 700802 / V583).